A 299-amino-acid chain; its full sequence is Ankyrin repeat domain-containing protein 54 (299 aa).

A disordered region spans residues 1-32 (MAAAAGGADDESRSGRSSSDGECAVAPEPLTG). Residue alanine 2 is modified to N-acetylalanine. Serine 57 and serine 62 each carry phosphoserine. The Nuclear localization signal (NLS) signature appears at 98–116 (RRLGPTGKEVHALKRLRDS). ANK repeat units follow at residues 108 to 137 (HALKRLRDSANANDVETVQQLLEEGTDPCA), 141 to 170 (KGRTALHFASCNGNDQIVQLLLDHGADPNQ), 174 to 203 (LGNTPLHLAACTNHAPVITTLLRGGARVDA), and 207 to 239 (AGRTPLHLAKSKLNILQEGHSQCLEAVRLEVKQ). Positions 140-240 (DKGRTALHFA…EAVRLEVKQI (101 aa)) are LYN-binding. The Nuclear export signal (NES) motif lies at 282–292 (LLASFTSLSLQ).

As to quaternary structure, interacts (via ankyrin repeat region) with LYN (via SH3-domain) in an activation-independent status of LYN. Forms a multiprotein complex with LYN and HCLS1. Interacts with TSN2, VAV1, DBNL and LASP1.

Its subcellular location is the nucleus. The protein localises to the cytoplasm. It is found in the midbody. Its function is as follows. Plays an important role in regulating intracellular signaling events associated with erythroid terminal differentiation. This Bos taurus (Bovine) protein is Ankyrin repeat domain-containing protein 54 (ANKRD54).